We begin with the raw amino-acid sequence, 92 residues long: Small ribosomal subunit protein uS19c (92 aa).

This sequence belongs to the universal ribosomal protein uS19 family.

The protein localises to the plastid. The protein resides in the chloroplast. In terms of biological role, protein S19 forms a complex with S13 that binds strongly to the 16S ribosomal RNA. The sequence is that of Small ribosomal subunit protein uS19c from Coffea arabica (Arabian coffee).